The primary structure comprises 417 residues: Serine hydroxymethyltransferase (417 aa).

(6S)-5,6,7,8-tetrahydrofolate contacts are provided by residues leucine 121 and glycine 125–leucine 127. Residue lysine 229 is modified to N6-(pyridoxal phosphate)lysine. Serine 355–phenylalanine 357 serves as a coordination point for (6S)-5,6,7,8-tetrahydrofolate.

Belongs to the SHMT family. In terms of assembly, homodimer. It depends on pyridoxal 5'-phosphate as a cofactor.

The protein resides in the cytoplasm. The enzyme catalyses (6R)-5,10-methylene-5,6,7,8-tetrahydrofolate + glycine + H2O = (6S)-5,6,7,8-tetrahydrofolate + L-serine. The protein operates within one-carbon metabolism; tetrahydrofolate interconversion. It functions in the pathway amino-acid biosynthesis; glycine biosynthesis; glycine from L-serine: step 1/1. Functionally, catalyzes the reversible interconversion of serine and glycine with tetrahydrofolate (THF) serving as the one-carbon carrier. This reaction serves as the major source of one-carbon groups required for the biosynthesis of purines, thymidylate, methionine, and other important biomolecules. Also exhibits THF-independent aldolase activity toward beta-hydroxyamino acids, producing glycine and aldehydes, via a retro-aldol mechanism. The chain is Serine hydroxymethyltransferase from Shewanella baltica (strain OS185).